The sequence spans 571 residues: Membrane protein insertase YidC (571 aa).

Residues 4–24 form a helical membrane-spanning segment; that stretch reads TRVFLIFAWLMVAVLLWMEWS. The segment at 29 to 78 is disordered; that stretch reads APTPAPTTTSAPAAAQSVPGANPGAIPSAQVPGAPGQAAAQAQASATPAS. Low complexity-rich tracts occupy residues 34-43 and 55-78; these read PTTTSAPAAA and PSAQVPGAPGQAAAQAQASATPAS. 4 consecutive transmembrane segments (helical) span residues 369-389, 440-460, 483-503, and 518-538; these read LVGNWGWAIVGLVVLLKLVLY, GGCLPILIQMPIFFALYWVLV, YFILPVINVAVMWFTQKLTPA, and PLVFGVMMAFMPSGLVLYWVV.

This sequence belongs to the OXA1/ALB3/YidC family. Type 1 subfamily. As to quaternary structure, interacts with the Sec translocase complex via SecD. Specifically interacts with transmembrane segments of nascent integral membrane proteins during membrane integration.

It is found in the cell inner membrane. Functionally, required for the insertion and/or proper folding and/or complex formation of integral membrane proteins into the membrane. Involved in integration of membrane proteins that insert both dependently and independently of the Sec translocase complex, as well as at least some lipoproteins. Aids folding of multispanning membrane proteins. This is Membrane protein insertase YidC from Stenotrophomonas maltophilia (strain K279a).